Consider the following 112-residue polypeptide: C-X-C motif chemokine 6 (112 aa).

Residues 1-36 (MRLLSSRAARVSGPSGSLCALLALLLLTPPGPLASA) form the signal peptide. Disulfide bonds link Cys48/Cys74 and Cys50/Cys90.

This sequence belongs to the intercrine alpha (chemokine CxC) family.

It localises to the secreted. Its function is as follows. Chemotactic for neutrophil granulocytes. Signals through binding and activation of its receptors (CXCR1 and CXCR2). In addition to its chemotactic and angiogenic properties, it has strong antibacterial activity against Gram-positive and Gram-negative bacteria (90-fold-higher when compared to CXCL5 and CXCL7). The chain is C-X-C motif chemokine 6 (CXCL6) from Bos taurus (Bovine).